The chain runs to 275 residues: Formamidopyrimidine-DNA glycosylase (275 aa).

P2 (schiff-base intermediate with DNA) is an active-site residue. The active-site Proton donor is E3. The active-site Proton donor; for beta-elimination activity is K58. Positions 92, 111, and 154 each coordinate DNA. The FPG-type zinc-finger motif lies at H239–V273. R263 functions as the Proton donor; for delta-elimination activity in the catalytic mechanism.

Belongs to the FPG family. Monomer. Zn(2+) is required as a cofactor.

The catalysed reaction is Hydrolysis of DNA containing ring-opened 7-methylguanine residues, releasing 2,6-diamino-4-hydroxy-5-(N-methyl)formamidopyrimidine.. The enzyme catalyses 2'-deoxyribonucleotide-(2'-deoxyribose 5'-phosphate)-2'-deoxyribonucleotide-DNA = a 3'-end 2'-deoxyribonucleotide-(2,3-dehydro-2,3-deoxyribose 5'-phosphate)-DNA + a 5'-end 5'-phospho-2'-deoxyribonucleoside-DNA + H(+). Involved in base excision repair of DNA damaged by oxidation or by mutagenic agents. Acts as a DNA glycosylase that recognizes and removes damaged bases. Has a preference for oxidized purines, such as 7,8-dihydro-8-oxoguanine (8-oxoG). Has AP (apurinic/apyrimidinic) lyase activity and introduces nicks in the DNA strand. Cleaves the DNA backbone by beta-delta elimination to generate a single-strand break at the site of the removed base with both 3'- and 5'-phosphates. This Pediococcus pentosaceus (strain ATCC 25745 / CCUG 21536 / LMG 10740 / 183-1w) protein is Formamidopyrimidine-DNA glycosylase.